A 1003-amino-acid chain; its full sequence is Helicase-like transcription factor (1003 aa).

The residue at position 27 (Arg27) is an Omega-N-methylarginine. The interval 38–287 is DNA-binding; the sequence is EFQDIIPPDD…FSVKERPENV (250 aa). A Glycyl lysine isopeptide (Lys-Gly) (interchain with G-Cter in SUMO2) cross-link involves residue Lys112. The residue at position 195 (Tyr195) is a Phosphotyrosine; by JAK2. Lys211 participates in a covalent cross-link: Glycyl lysine isopeptide (Lys-Gly) (interchain with G-Cter in SUMO2). An ATP-binding site is contributed by 294–301; sequence DDMGLGKT. The interval 317-373 is disordered; it reads PLLSKRGKKNHPGKEYKDETIKRRGSNMDKKEDGHSESSTCGEEPSISGTPEKSSCT. Residues 328–352 are compositionally biased toward basic and acidic residues; sequence PGKEYKDETIKRRGSNMDKKEDGHS. The segment covering 353–373 has biased composition (polar residues); that stretch reads ESSTCGEEPSISGTPEKSSCT. Phosphoserine is present on residues Ser394, Ser395, and Ser397. The Helicase ATP-binding domain occupies 433-600; that stretch reads DSKFALTFFA…WSLLSFLKLK (168 aa). Positions 551–554 match the DEGH box motif; sequence DEGH. Thr730 is subject to Phosphothreonine. The segment at 754–795 adopts an RING-type zinc-finger fold; the sequence is CAICLDSLTFPVITHCAHVFCKPCICQVIHSEQPHAKCPLCR. Residues 831-990 enclose the Helicase C-terminal domain; it reads ALMHALIELR…TKKTDANDMK (160 aa). Residues 919 to 1003 form an interaction with SP1 and SP3 region; it reads SRVFLMDPAW…INEIRTLIDL (85 aa).

This sequence belongs to the SNF2/RAD54 helicase family. RAD16 subfamily. In terms of assembly, interacts with SP1 and SP3 independently of DNA; the interaction with these transcriptional factors may be required for basal transcription of target genes. Interacts with EGR1; the interaction requires prior binding to DNA and represses c-Rel via a DNA looping mechanism. Interacts with GATA4. Interacts with PCNA; the interaction promotes polyubiquitination of PCNA through association with the UBE2B-RAD18 and UBE2V2-UBE2N ubiquitin ligase complexes. Interacts with RAD18, SHPRH, UBE2V2 and UBE2N. Expressed in brain, heart, kidney, liver, lung, pancreas, placenta and skeletal muscle.

It is found in the cytoplasm. It localises to the nucleus. The protein localises to the nucleolus. Its subcellular location is the nucleoplasm. It catalyses the reaction S-ubiquitinyl-[E2 ubiquitin-conjugating enzyme]-L-cysteine + [acceptor protein]-L-lysine = [E2 ubiquitin-conjugating enzyme]-L-cysteine + N(6)-ubiquitinyl-[acceptor protein]-L-lysine.. It participates in protein modification; protein ubiquitination. Has both helicase and E3 ubiquitin ligase activities. Possesses intrinsic ATP-dependent nucleosome-remodeling activity. This activity may be required for transcriptional activation or repression of specific target promoters. These may include the SERPINE1, to which this protein can bind directly. Plays a role in error-free postreplication repair (PRR) of damaged DNA and maintains genomic stability through acting as a ubiquitin ligase for 'Lys-63'-linked polyubiquitination of chromatin-bound PCNA. This is Helicase-like transcription factor (Hltf) from Mus musculus (Mouse).